A 101-amino-acid polypeptide reads, in one-letter code: Urease subunit beta (101 aa).

This sequence belongs to the urease beta subunit family. In terms of assembly, heterotrimer of UreA (gamma), UreB (beta) and UreC (alpha) subunits. Three heterotrimers associate to form the active enzyme.

It localises to the cytoplasm. The enzyme catalyses urea + 2 H2O + H(+) = hydrogencarbonate + 2 NH4(+). Its pathway is nitrogen metabolism; urea degradation; CO(2) and NH(3) from urea (urease route): step 1/1. This chain is Urease subunit beta, found in Cupriavidus necator (strain ATCC 17699 / DSM 428 / KCTC 22496 / NCIMB 10442 / H16 / Stanier 337) (Ralstonia eutropha).